Reading from the N-terminus, the 572-residue chain is Arginine--tRNA ligase (572 aa).

The 'HIGH' region signature appears at 121–131 (PNLAKEMHVGH).

This sequence belongs to the class-I aminoacyl-tRNA synthetase family. In terms of assembly, monomer.

It localises to the cytoplasm. It catalyses the reaction tRNA(Arg) + L-arginine + ATP = L-arginyl-tRNA(Arg) + AMP + diphosphate. This Chromobacterium violaceum (strain ATCC 12472 / DSM 30191 / JCM 1249 / CCUG 213 / NBRC 12614 / NCIMB 9131 / NCTC 9757 / MK) protein is Arginine--tRNA ligase.